Here is a 356-residue protein sequence, read N- to C-terminus: MEVLEEKPKEGKVKLKVETLDDLWHLYHVISPGDIVYAKTLRKQAQRSDSLRPEKVEAIPVFLGVRAEKINLHRFANQLRVTGPIVYASRDDVPLGKYHTIAVEPGMTITIQKERWRSHHVERIKEAVEASKRAKVMIVAMEDGEAEVAIVREYGLDFIASIRHNIGGKRYNVKREDEEKKFFHDVAKTIKDLIERENVQKVIVAGPGFYKENFYGFLRENYPELAGKVVLDDTSMGGRVGVYEVIKRGTVDKVYTETRVAQEIKLVEKVIERIAKDEPVAYGLKDVEEAVNYGAVDTLLVLDELLKGDDRERIEEIMEMARNLRANVVVVSSEHEGGDKLKALGGIAAILRFKIH.

This sequence belongs to the eukaryotic release factor 1 family. Pelota subfamily. In terms of assembly, monomer. A divalent metal cation is required as a cofactor.

It localises to the cytoplasm. May function in recognizing stalled ribosomes, interact with stem-loop structures in stalled mRNA molecules, and effect endonucleolytic cleavage of the mRNA. May play a role in the release non-functional ribosomes and degradation of damaged mRNAs. Has endoribonuclease activity. This chain is Protein pelota homolog, found in Pyrococcus abyssi (strain GE5 / Orsay).